Reading from the N-terminus, the 384-residue chain is Opsin-3 (384 aa).

Residues 1-62 lie on the Extracellular side of the membrane; the sequence is MATNFTQELY…VSKYWHYVLA (62 aa). N-linked (GlcNAc...) asparagine glycosylation is present at asparagine 4. The helical transmembrane segment at 63 to 83 threads the bilayer; that stretch reads LIYTMLMVTSLTGNGIVIWIF. At 84–94 the chain is on the cytoplasmic side; the sequence is STSKSLRSASN. Residues 95-115 traverse the membrane as a helical segment; the sequence is MFVINLAVFDLMMMLEMPLLI. Over 116 to 132 the chain is Extracellular; sequence MNSFYQRLVGYQLGCDV. Cysteine 130 and cysteine 207 are joined by a disulfide. A helical membrane pass occupies residues 133 to 153; the sequence is YAVLGSLSGIGGAITNAVIAF. The Cytoplasmic segment spans residues 154–171; it reads DRYKTISSPLDGRINTVQ. A helical transmembrane segment spans residues 172-192; it reads AGLLIAFTWFWALPFTILPAF. Over 193–219 the chain is Extracellular; the sequence is RIWGRFVPEGFLTTCSFDYFTEDQDTE. A helical transmembrane segment spans residues 220–240; it reads VFVACIFVWSYCIPMALICYF. At 241-284 the chain is on the cytoplasmic side; sequence YSQLFGAVRLHERMLQEQAKKMNVKSLASNKEDNSRSVEIRIAK. Residues 285–305 form a helical membrane-spanning segment; sequence VAFTIFFLFICAWTPYAFVTM. At 306 to 312 the chain is on the extracellular side; that stretch reads TGAFGDR. A helical transmembrane segment spans residues 313-333; sequence TLLTPIATMIPAVCCKVVSCI. Topologically, residues 334-384 are cytoplasmic; it reads DPWVYAINHPRYRAELQKRLPWMGVREQDPDAVSTTTSVATAGFQPPAAEA.

This sequence belongs to the G-protein coupled receptor 1 family. Opsin subfamily. In terms of tissue distribution, in the retina, expression is essentially uniformly distributed but a higher level is seen in the ventral region where the B-cells are localized.

It localises to the membrane. Visual pigments are the light-absorbing molecules that mediate vision. They consist of an apoprotein, opsin, covalently linked to cis-retinal. May play a role in photoperiodic photoreception. The polypeptide is Opsin-3 (OP3) (Manduca sexta (Tobacco hawkmoth)).